The following is a 147-amino-acid chain: Protein MGF 100-3L (147 aa).

This sequence belongs to the asfivirus MGF 100 family.

Plays a role in virus cell tropism, and may be required for efficient virus replication in macrophages. This African swine fever virus (isolate Tick/Malawi/Lil 20-1/1983) (ASFV) protein is Protein MGF 100-3L.